Consider the following 1342-residue polypeptide: DNA-directed RNA polymerase subunit beta (1342 aa).

Belongs to the RNA polymerase beta chain family. As to quaternary structure, the RNAP catalytic core consists of 2 alpha, 1 beta, 1 beta' and 1 omega subunit. When a sigma factor is associated with the core the holoenzyme is formed, which can initiate transcription.

It carries out the reaction RNA(n) + a ribonucleoside 5'-triphosphate = RNA(n+1) + diphosphate. Its function is as follows. DNA-dependent RNA polymerase catalyzes the transcription of DNA into RNA using the four ribonucleoside triphosphates as substrates. The chain is DNA-directed RNA polymerase subunit beta from Blochmanniella floridana.